The chain runs to 248 residues: Mannose-binding protein C (248 aa).

The N-terminal stretch at 1 to 20 (MSLFPSLPLLLLSMVAASYS) is a signal peptide. Residues 42 to 99 (GINGFPGKDGRDGTKGEKGEPGQGLRGLQGPPGKLGPPGNPGPSGSPGPKGQKGDPGK) enclose the Collagen-like domain. Positions 43–113 (INGFPGKDGR…DSSLAASERK (71 aa)) are disordered. At Pro47 the chain carries Hydroxyproline. Positions 49–61 (KDGRDGTKGEKGE) are enriched in basic and acidic residues. Hydroxyproline is present on residues Pro73, Pro79, Pro82, and Pro88. Positions 75–87 (KLGPPGNPGPSGS) are enriched in pro residues. Over residues 93–102 (QKGDPGKSPD) the composition is skewed to basic and acidic residues. The stretch at 112-130 (RKALQTEMARIKKWLTFSL) forms a coiled coil. The C-type lectin domain occupies 134–245 (VGNKFFLTNG…CSTSHLAVCE (112 aa)). 2 disulfide bridges follow: Cys155–Cys244 and Cys222–Cys236.

Oligomeric complex of 3 or more homotrimers. Interacts with MASP1 and MASP2. Interacts with MEP1A and MEP1B and may inhibit their catalytic activity. Interacts with CR1 (via Sushi 24 and Sushi 25 domains). As to quaternary structure, (Microbial infection) Interacts with SARS coronavirus-2/SARS-CoV-2 Spike glycoprotein homotrimer; the interaction is calcium-dependent and modulated by Spike glycoprotein glycosylation state. In terms of tissue distribution, plasma protein produced mainly in the liver.

It localises to the secreted. Calcium-dependent lectin involved in innate immune defense. Binds mannose, fucose and N-acetylglucosamine on different microorganisms and activates the lectin complement pathway. Binds to late apoptotic cells, as well as to apoptotic blebs and to necrotic cells, but not to early apoptotic cells, facilitating their uptake by macrophages. May bind DNA. Upon SARS coronavirus-2/SARS-CoV-2 infection, activates the complement lectin pathway which leads to the inhibition SARS-CoV-2 infection and a reduction of the induced inflammatory response. The sequence is that of Mannose-binding protein C from Homo sapiens (Human).